A 61-amino-acid chain; its full sequence is Small ribosomal subunit protein uS14 (61 aa).

C24, C27, C40, and C43 together coordinate Zn(2+).

This sequence belongs to the universal ribosomal protein uS14 family. Zinc-binding uS14 subfamily. In terms of assembly, part of the 30S ribosomal subunit. Contacts proteins S3 and S10. Zn(2+) is required as a cofactor.

In terms of biological role, binds 16S rRNA, required for the assembly of 30S particles and may also be responsible for determining the conformation of the 16S rRNA at the A site. The sequence is that of Small ribosomal subunit protein uS14 from Thermodesulfovibrio yellowstonii (strain ATCC 51303 / DSM 11347 / YP87).